A 398-amino-acid polypeptide reads, in one-letter code: uncharacterized protein (398 aa).

A BIG2 domain is found at 240 to 306 (SLNKNIDQLI…SITVTTNDGS (67 aa)).

This is an uncharacterized protein from Clostridium acetobutylicum (strain ATCC 824 / DSM 792 / JCM 1419 / IAM 19013 / LMG 5710 / NBRC 13948 / NRRL B-527 / VKM B-1787 / 2291 / W).